The primary structure comprises 396 residues: Apolipoprotein A-IV (396 aa).

An N-terminal signal peptide occupies residues 1-20; sequence MFLKAVVLTLALVAVAGARA. 13 tandem repeats follow at residues 33–54, 60–81, 82–103, 115–136, 137–158, 159–180, 181–202, 203–224, 225–246, 247–268, 269–286, 287–308, and 309–330. The tract at residues 33–330 is 13 X 22 AA approximate tandem repeats; it reads DYFSQLSNNA…QMEQLRQKLG (298 aa). Residues 361–396 are disordered; that stretch reads KESQDKTLSLPELEQQQEQQQEQQQEQVQMLAPLES. Over residues 374–389 the composition is skewed to low complexity; sequence EQQQEQQQEQQQEQVQ.

It belongs to the apolipoprotein A1/A4/E family. As to quaternary structure, homodimer. Post-translationally, phosphorylation sites are present in the extracellular medium. In terms of tissue distribution, synthesized primarily in the intestine and secreted in plasma.

It is found in the secreted. Its function is as follows. May have a role in chylomicrons and VLDL secretion and catabolism. Required for efficient activation of lipoprotein lipase by ApoC-II; potent activator of LCAT. Apoa-IV is a major component of HDL and chylomicrons. This Homo sapiens (Human) protein is Apolipoprotein A-IV.